Reading from the N-terminus, the 387-residue chain is Na(+)/H(+)-K(+) antiporter GerN (387 aa).

A run of 11 helical transmembrane segments spans residues 29–49 (PSVL…LGWI), 54–74 (LLTQ…GLET), 87–107 (LAVA…SGLV), 114–134 (NAVF…VQTL), 149–169 (LGAA…AMSF), 175–195 (VNLT…ILIG), 219–239 (ALII…AGII), 263–283 (PIAY…NITF), 290–310 (IWFI…GCGF), 324–344 (IIGA…GTGL), and 347–367 (GLLA…TTMI).

Belongs to the monovalent cation:proton antiporter 2 (CPA2) transporter (TC 2.A.37) family.

The protein resides in the membrane. Its function is as follows. Na(+)/H(+) antiporter that extrudes sodium in exchange for external protons. Can also use potassium as a coupling ion, without completely replacing H(+). This Na(+)/H(+)-K(+) antiport is much more rapid than Na(+)/H(+) antiport. Can also extrude lithium. Important for the inosine-dependent germination of spores. The sequence is that of Na(+)/H(+)-K(+) antiporter GerN (gerN) from Bacillus cereus.